Consider the following 466-residue polypeptide: Cysteine--tRNA ligase (466 aa).

Cys-30 is a Zn(2+) binding site. Positions 32–42 match the 'HIGH' region motif; sequence PTVYNYIHIGN. 3 residues coordinate Zn(2+): Cys-210, His-235, and Glu-239. A 'KMSKS' region motif is present at residues 267–271; the sequence is KMSKS. Lys-270 provides a ligand contact to ATP. Ser-271 is subject to Phosphoserine.

Belongs to the class-I aminoacyl-tRNA synthetase family. Monomer. It depends on Zn(2+) as a cofactor.

The protein localises to the cytoplasm. It carries out the reaction tRNA(Cys) + L-cysteine + ATP = L-cysteinyl-tRNA(Cys) + AMP + diphosphate. The chain is Cysteine--tRNA ligase from Geobacillus sp. (strain WCH70).